Consider the following 415-residue polypeptide: Peptide chain release factor subunit 1-1 (415 aa).

The protein belongs to the eukaryotic release factor 1 family. As to quaternary structure, heterodimer of two subunits, one of which binds GTP.

The protein localises to the cytoplasm. Its function is as follows. Directs the termination of nascent peptide synthesis (translation) in response to the termination codons UAA, UAG and UGA. This is Peptide chain release factor subunit 1-1 from Methanosarcina acetivorans (strain ATCC 35395 / DSM 2834 / JCM 12185 / C2A).